Consider the following 483-residue polypeptide: Protein DETOXIFICATION 6 (483 aa).

12 consecutive transmembrane segments (helical) span residues 38–58 (ALPM…SVMV), 69–89 (GVAL…FGLA), 113–133 (FSAI…WFYM), 146–166 (ISKV…AQAV), 187–207 (AITT…AFGL), 211–231 (GAAL…ALYV), 263–283 (AAMT…SGLL), 292–312 (VLSI…GIGA), 334–354 (VFAG…LLFI), 376–396 (LSPL…LGGV), 405–425 (IGAW…GLFL), and 436–456 (LWIG…IVTA).

Belongs to the multi antimicrobial extrusion (MATE) (TC 2.A.66.1) family.

The protein localises to the membrane. In Arabidopsis thaliana (Mouse-ear cress), this protein is Protein DETOXIFICATION 6.